The following is a 161-amino-acid chain: Transcription initiation factor TFIID subunit 12 (161 aa).

Residues 15 to 55 (FSSIKPEPASTPPQGSMANSTAVVKIPGTPGAGGRLSPENN) are disordered. Lys19 is covalently cross-linked (Glycyl lysine isopeptide (Lys-Gly) (interchain with G-Cter in SUMO2)). Residues 26–36 (PPQGSMANSTA) are compositionally biased toward polar residues. Thr43 carries the phosphothreonine modification. Position 51 is a phosphoserine (Ser51). Position 59 is a phosphothreonine (Thr59). A Histone-fold domain is found at 59-126 (TKKKLQDLVR…QLHLERQWNM (68 aa)).

The protein belongs to the TAF12 family. Component of the TFIID basal transcription factor complex, composed of TATA-box-binding protein TBP, and a number of TBP-associated factors (TAFs), including TAF1, TAF2, TAF3, TAF4, TAF5, TAF6, TAF7, TAF8, TAF9, TAF10, TAF11, TAF12 and TAF13. Component of the TATA-binding protein-free TAF complex (TFTC), the PCAF histone acetylase complex and the STAGA transcription coactivator-HAT complex. Component of the PCAF complex, at least composed of TADA2L/ADA2, TADA3L/ADA3, TAF5L/PAF65-beta, SUPT3H, TAF6L, TAF9, TAF10, TAF12 and TRRAP. Component of the STAGA transcription coactivator-HAT complex, at least composed of SUPT3H, GCN5L2, TAF5L, TAF6L, STAF65-gamma/SUPT7L, TADA3L, TAD1L, TAF10, TAF12, TRRAP and TAF9. Interacts with ATF7 (via the transactivation domain); the interaction is prevented by sumoylation of ATF7. As to quaternary structure, interacts with TBP; the interaction is direct. Interacts with TAF10; the interaction is direct. Interacts with ATF7, promoting transactivation by ATF7. In terms of assembly, does not promote the transactivation of ATF7. In terms of tissue distribution, ubiquitous.

It localises to the nucleus. In terms of biological role, the TFIID basal transcription factor complex plays a major role in the initiation of RNA polymerase II (Pol II)-dependent transcription. TFIID recognizes and binds promoters with or without a TATA box via its subunit TBP, a TATA-box-binding protein, and promotes assembly of the pre-initiation complex (PIC). The TFIID complex consists of TBP and TBP-associated factors (TAFs), including TAF1, TAF2, TAF3, TAF4, TAF5, TAF6, TAF7, TAF8, TAF9, TAF10, TAF11, TAF12 and TAF13. Component of the TATA-binding protein-free TAF complex (TFTC), the PCAF histone acetylase complex and the STAGA transcription coactivator-HAT complex. The polypeptide is Transcription initiation factor TFIID subunit 12 (Homo sapiens (Human)).